Here is an 880-residue protein sequence, read N- to C-terminus: Zinc-responsive transcriptional regulator ZAP1 (880 aa).

Disordered regions lie at residues 1–26 (MDAL…AASA) and 140–164 (NNFH…PRRK). Low complexity predominate over residues 17 to 26 (ATSAATAASA). Polar residues predominate over residues 147-158 (SDPTSPQQNSKS). Residues Ser156 and Ser166 each carry the phosphoserine modification. The tract at residues 182-502 (KPNPPPGSDD…LTNNDLNDLI (321 aa)) is zinc-responsive domain 1 (ZRD(AD1)). The segment at 207 to 402 (HPKSEANIKQ…YEVPFGKHIN (196 aa)) is transcription activation domain 1 (AD1). Disordered stretches follow at residues 436-482 (NRCN…VNNS) and 510-555 (RFRN…PSSI). A compositionally biased stretch (low complexity) spans 442 to 456 (NNLNGSNNNTAGATS). Basic residues predominate over residues 460-474 (QHHHHRIQFHSHKPN). A Phosphoserine modification is found at Ser515. The segment covering 545–555 (SSLEDSLPSSI) has biased composition (low complexity). A C2H2-type 1 zinc finger spans residues 579-604 (LKCKWKECPESCSSLFDLQRHLLKDH). The zinc-responsive domain 2 (ZRD(AD2)) stretch occupies residues 579–641 (LKCKWKECPE…SIVNHINCQH (63 aa)). Cys581, Cys586, His599, His604, Cys618, Cys623, His636, and His641 together coordinate Zn(2+). Positions 611–640 (HPMEPLACNWEDCDFLGDDTCSIVNHINCQ) are transcription activation domain 2 (AD2). Residues 616–641 (LACNWEDCDFLGDDTCSIVNHINCQH) form a C2H2-type 2; atypical zinc finger. 5 C2H2-type zinc fingers span residues 705-730 (VICQ…EAVH), 738-762 (YQCL…LKVH), 768-790 (YKCK…TRTH), 796-818 (YKCH…IRTH), and 824-846 (LQCK…IKTH). Residues 705 to 846 (VICQWDGCNK…SNLSKHIKTH (142 aa)) constitute a DNA-binding region (DNA-binding domain).

It localises to the nucleus. Its activity is regulated as follows. Active in zinc-limited cells and repressed in replete cells. Zinc controls ZAP1 DNA binding activity. Transcription regulator controlling zinc-responsive gene expression. Binds to zinc-responsive elements (ZREs) (consensus sequence 5'-ACCYYNAAGGT-3') in the promoter of target genes. Recruits SWI/SNF, SAGA, and Mediator complexes as coactivators in a zinc-responsive manner. Involved in zinc ion homeostasis by zinc-responsive transcriptional regulation of the zinc uptake system genes ZTR1 and ZTR2. Positively regulates ETR1 expression, affecting mitochondrial function. This is Zinc-responsive transcriptional regulator ZAP1 (ZAP1) from Saccharomyces cerevisiae (strain ATCC 204508 / S288c) (Baker's yeast).